The following is a 659-amino-acid chain: RNA-binding E3 ubiquitin-protein ligase MEX3C (659 aa).

Residues Met1–Pro15 are compositionally biased toward low complexity. Positions Met1–Ser140 are disordered. Residues Ala16–Gly37 are compositionally biased toward pro residues. Residues Glu64–Arg82 are compositionally biased toward low complexity. Residues Arg83–Pro94 are compositionally biased toward basic and acidic residues. Ser88 bears the Phosphoserine mark. Residues Ala104–Asp137 show a composition bias toward acidic residues. KH domains lie at Thr232 to Ile293 and Gln326 to Ile387. The segment at Phe513–Asn569 is disordered. Over residues Pro526–Leu544 the composition is skewed to polar residues. Residues Ser537 and Ser545 each carry the phosphoserine modification. Over residues Ser551 to Ser562 the composition is skewed to basic and acidic residues. The segment at Cys608–Gln648 adopts an RING-type zinc-finger fold.

Interacts with USP7, which antagonizes the ability to degrade mRNA. Highest levels found in fetal brain and testis. Also expressed in thymus, salivary gland and uterus. Highly expressed in cells of the innate immune system, in particular activated NK cells. Week expression in the intestine.

The protein resides in the cytoplasm. The protein localises to the nucleus. The enzyme catalyses S-ubiquitinyl-[E2 ubiquitin-conjugating enzyme]-L-cysteine + [acceptor protein]-L-lysine = [E2 ubiquitin-conjugating enzyme]-L-cysteine + N(6)-ubiquitinyl-[acceptor protein]-L-lysine.. In terms of biological role, E3 ubiquitin ligase responsible for the post-transcriptional regulation of common HLA-A allotypes. Binds to the 3' UTR of HLA-A2 mRNA, and regulates its levels by promoting mRNA decay. RNA binding is sufficient to prevent translation, but ubiquitin ligase activity is required for mRNA degradation. The polypeptide is RNA-binding E3 ubiquitin-protein ligase MEX3C (MEX3C) (Homo sapiens (Human)).